The following is a 1785-amino-acid chain: Plexin-2 (1785 aa).

The N-terminal stretch at 1–17 is a signal peptide; sequence MLPESVFLLLISHFLRA. The 427-residue stretch at 18–444 folds into the Sema domain; it reads VTQPPFETEG…MPYGIILEEL (427 aa). At 18–1139 the chain is on the extracellular side; the sequence is VTQPPFETEG…SDHALPSRLS (1122 aa). N66 carries N-linked (GlcNAc...) asparagine glycosylation. 9 cysteine pairs are disulfide-bonded: C84–C91, C118–C126, C247–C349, C263–C300, C318–C336, C447–C464, C453–C487, C456–C473, and C467–C479. N-linked (GlcNAc...) asparagine glycosylation occurs at N249. Residues 446–488 form the PSI 1 domain; the sequence is TCSHHSSCTECLVSVDPLCQWCHPTQSCTTSARCTSPVTSQCP. N-linked (GlcNAc...) asparagine glycosylation is found at N502, N536, and N572. A disulfide bond links C524 and C544. In terms of domain architecture, PSI 2 spans 577 to 617; the sequence is DCSGYGTCSSCMSSEYNCAWCSGLHKCSNSCGALEKSKACV. N-linked (GlcNAc...) asparagine glycosylation is found at N679 and N702. The region spanning 707 to 748 is the PSI 3 domain; sequence SCTNLASDCSSCLALSPSLSCGWCNRQCSHECHESKATAVCD. 3 consecutive IPT/TIG domains span residues 750–837, 840–924, and 928–1040; these read PRID…LYSF, TSIF…PFEY, and PSIS…LSPF. N-linked (GlcNAc...) asparagine glycosylation is found at N864, N886, N984, and N1016. The helical transmembrane segment at 1140–1160 threads the bilayer; the sequence is LLILGLLLFIVVTLTVMCLVF. Residues 1159 to 1197 adopt a coiled-coil conformation; that stretch reads VFKRRRQEREKEYRKIQLQMENLENNVRKECKQAFAELQ. At 1161-1785 the chain is on the cytoplasmic side; sequence KRRRQEREKE…HIYSTISDYE (625 aa).

This sequence belongs to the plexin family. As to quaternary structure, interacts with mab-20. As to expression, expressed predominantly in the central nervous system from embryonic to adult stages. Expressed in early embryos in ventral neuroblasts. Expressed in neurons and in a subset of posterior lateral and ventral epidermal cells following epidermal enclosure. Present in neurons, muscles and weakly expressed in epidermal cells of the larval tail.

It is found in the cell membrane. Functionally, involved as a receptor for mab-20/sema-2a in the formation or stabilization of cell-cell contacts at several stages of epithelial morphogenesis. In early embryonic development, required for proper ventral closure of the epidermis. During male tail morphogenesis, involved in precursor cell sorting and in the formation of distinct sensory rays. Involved in axon guidance of SDQL neurons during neurogenesis. Probably in response to stimulation by mab-20, regulates fln-1-mediated remodeling of the actin cytoskeleton and thus axon guidance and/or fasciculation of DD/VD neurons. This is Plexin-2 from Caenorhabditis elegans.